A 566-amino-acid chain; its full sequence is MNPTTPRGGQLWSRCGGCASLLYRKRLRRNLDVCPECGAHSRLDAPARLAQLVDPGSFTALADRAPEVDPIGFVDVLPYPHRLTAARSGTGLAEAVVCGTATVAGSRCVIAVMDFRFLGGSLGCAVGELITQAAERALADRVPLVVVTASGGARMQEGVLSLMQMATVSQAVAALRESGVPSVSVLTDPTYGGVAASFATNTDVVIAESGARMGFAGPRVIRQVTGRELPDGFQTAEFLLRHGQVDLVVPRHALRGCLATLLAAASGGREPVGAGHESECPPVDGSSTQERGADKRDAWETVRLARHPGRPTTLDYLETAFDSFVELHGDRLGADCPAVVGGLAELAGRPVLVVGHQKGHTTGDLMSRNFGMASPAGHRKALRLARLAARWGLPVVTLVDTPGADPGVGAEEQGQAAAIAENILTLTMLPTPVVAVITGEGGSGGALALAVADRVLMLEHAVYSVISPEGCAAILWPDRSAAPQAARALRLTSADLCRLGVVDAVVPEPAPAAHHDPPAAMQAVREAVLAHLVPLLEVPTATLVRRRRRRFRRFGAAGLGARAGAR.

The segment at M1 to G243 is acetyl-coenzyme A carboxylase carboxyl transferase subunit beta. Residues L11 to C280 form the CoA carboxyltransferase N-terminal domain. The tract at residues L11 to P534 is carboxyltransferase. Zn(2+) contacts are provided by C15, C18, C34, and C37. The interval Q244–A557 is acetyl-coenzyme A carboxylase carboxyl transferase subunit alpha. Positions G268–K295 are disordered. The CoA carboxyltransferase C-terminal domain maps to P282 to P534.

The protein in the N-terminal section; belongs to the AccD/PCCB family. This sequence in the C-terminal section; belongs to the AccA family. As to quaternary structure, acetyl-CoA carboxylase is a heterotetramer composed of biotin carboxyl carrier protein (AccB), biotin carboxylase (AccC) and two subunits of ACCase subunit beta/alpha. Zn(2+) is required as a cofactor.

It localises to the cytoplasm. It carries out the reaction N(6)-carboxybiotinyl-L-lysyl-[protein] + acetyl-CoA = N(6)-biotinyl-L-lysyl-[protein] + malonyl-CoA. It participates in lipid metabolism; malonyl-CoA biosynthesis; malonyl-CoA from acetyl-CoA: step 1/1. Its function is as follows. Component of the acetyl coenzyme A carboxylase (ACC) complex. Biotin carboxylase (BC) catalyzes the carboxylation of biotin on its carrier protein (BCCP) and then the CO(2) group is transferred by the transcarboxylase to acetyl-CoA to form malonyl-CoA. The sequence is that of Acetyl-coenzyme A carboxylase carboxyl transferase subunits beta/alpha (accD) from Salinispora tropica (strain ATCC BAA-916 / DSM 44818 / JCM 13857 / NBRC 105044 / CNB-440).